A 247-amino-acid polypeptide reads, in one-letter code: MSKQPDRLFSQPLEQVPDFVFNEDVVRVFPDMIKRSVPGYPTIVENLGVLAARFAQPGTALYDLGASLGAVTQSLRRHVRSDGCRVIAVDNSAAMVERCRQYLTAQDSMFQELLPVQVLEADILALPFEPASVVAMNFTLQFIAPDQRLELLGRIRQALLPGGALILSEKLRFADEQEQDLLNELHLDFKRANGYSELEIAQKRSAIENVMKPDTLETHQERLRAAGFSKVVPWFQCLNFASLIALP.

Residues Tyr-40, 65 to 67 (GAS), 90 to 91 (DN), 122 to 123 (DI), Asn-137, and Arg-204 each bind S-adenosyl-L-methionine.

This sequence belongs to the class I-like SAM-binding methyltransferase superfamily. Cx-SAM synthase family. In terms of assembly, homodimer.

It catalyses the reaction prephenate + S-adenosyl-L-methionine = carboxy-S-adenosyl-L-methionine + 3-phenylpyruvate + H2O. Its function is as follows. Catalyzes the conversion of S-adenosyl-L-methionine (SAM) to carboxy-S-adenosyl-L-methionine (Cx-SAM). This Pseudomonas putida (strain ATCC 47054 / DSM 6125 / CFBP 8728 / NCIMB 11950 / KT2440) protein is Carboxy-S-adenosyl-L-methionine synthase.